Reading from the N-terminus, the 391-residue chain is DNA-directed RNA polymerase I subunit RPA43 (391 aa).

Disordered regions lie at residues 1-27 (MANWTQEDGAPTPVTNPSEVSQVSGGS) and 220-391 (QKQV…KKSK). A compositionally biased stretch (basic residues) spans 288-299 (GRHKEKKKKKKR). Positions 289 to 353 (RHKEKKKKKK…RDKQQDSAEI (65 aa)) form a coiled coil. Over residues 312 to 323 (MNNNSLQETALD) the composition is skewed to polar residues. A compositionally biased stretch (basic residues) spans 336–345 (KEKKKKKKRD).

Belongs to the eukaryotic RPA43 RNA polymerase subunit family. Component of the RNA polymerase I (Pol I) complex consisting of at least 13 subunits.

Its subcellular location is the nucleus. The protein localises to the nucleolus. DNA-dependent RNA polymerase catalyzes the transcription of DNA into RNA using the four ribonucleoside triphosphates as substrates. Component of RNA polymerase I which synthesizes ribosomal RNA precursors. May be involved in recruitment of Pol I to rDNA promoters. The sequence is that of DNA-directed RNA polymerase I subunit RPA43 from Danio rerio (Zebrafish).